A 188-amino-acid polypeptide reads, in one-letter code: Ribosome-recycling factor (188 aa).

Belongs to the RRF family.

It is found in the cytoplasm. Responsible for the release of ribosomes from messenger RNA at the termination of protein biosynthesis. May increase the efficiency of translation by recycling ribosomes from one round of translation to another. The sequence is that of Ribosome-recycling factor from Akkermansia muciniphila (strain ATCC BAA-835 / DSM 22959 / JCM 33894 / BCRC 81048 / CCUG 64013 / CIP 107961 / Muc).